The sequence spans 939 residues: Progesterone receptor (939 aa).

Over residues 1 to 11 (MTERTGKDARA) the composition is skewed to basic and acidic residues. The AF3; mediates transcriptional activation (in isoform B) stretch occupies residues 1–174 (MTERTGKDAR…RSSQGAACPL (174 aa)). The tract at residues 1–302 (MTERTGKDAR…AEQDAPAPGC (302 aa)) is disordered. A modulating, Ala/Pro-rich region spans residues 1–572 (MTERTGKDAR…YSFESLPQKI (572 aa)). A Glycyl lysine isopeptide (Lys-Gly) (interchain with G-Cter in SUMO) cross-link involves residue K7. A compositionally biased stretch (low complexity) spans 15–26 (AGGAPSPAPAAE). S20 is modified (phosphoserine). Positions 27 to 36 (PESRRRDGGR) are enriched in basic and acidic residues. Residues 49-67 (AAAAAAAAAAASAAPSAPS) are compositionally biased toward low complexity. Residue S141 is modified to Phosphoserine. A mediates transcriptional transrepression (in isoform A) region spans residues 175–314 (MSRPEGKAGD…LATTMMDFIH (140 aa)). A Nuclear localization signal motif is present at residues 193-197 (KGPPR). Position 200 is a phosphoserine (S200). Composition is skewed to low complexity over residues 211-230 (GAHA…AALG) and 257-278 (PAAA…TAPV). At S303 the chain carries Phosphoserine; by MAPK1. Position 349 is a phosphoserine; by MAPK (S349). A Glycyl lysine isopeptide (Lys-Gly) (interchain with G-Cter in SUMO); alternate cross-link involves residue K392. Residue K392 forms a Glycyl lysine isopeptide (Lys-Gly) (interchain with G-Cter in ubiquitin); alternate linkage. S404 carries the phosphoserine; by CDK2 modification. An AF1; mediates transcriptional activation region spans residues 463-552 (PALECVLYKA…VYQPYLNYLR (90 aa)). K537 is covalently cross-linked (Glycyl lysine isopeptide (Lys-Gly) (interchain with G-Cter in SUMO)). 2 NR C4-type zinc fingers span residues 573-593 (CLIC…CGSC) and 609-633 (CAGR…LRKC). Residues 573-645 (CLICGDEASG…AGMVLGGRKF (73 aa)) constitute a DNA-binding region (nuclear receptor). Phosphoserine is present on S682. The 235-residue stretch at 685–919 (QDIQLIPPLI…EFPEMMSEVI (235 aa)) folds into the NR LBD domain. An AF2; mediates transcriptional activation region spans residues 693–939 (LINLLMSIEP…MVKPLLFHKK (247 aa)).

This sequence belongs to the nuclear hormone receptor family. NR3 subfamily. Interacts with SMARD1 and UNC45A. Interacts with CUEDC2; the interaction promotes ubiquitination, decreases sumoylation, and represses transcriptional activity. Interacts with PIAS3; the interaction promotes sumoylation of PR in a hormone-dependent manner, inhibits DNA-binding, and alters nuclear export. Interacts with SP1; the interaction requires ligand-induced phosphorylation on Ser-349 by ERK1/2-MAPK. Interacts with PRMT2. Isoform A interacts with NCOR2. Isoform B (but not isoform A) interacts with NCOA2 and NCOA1. Isoform B (but not isoform A) interacts with KLF9. Interacts with GTF2B. Phosphorylated on multiple serine sites. Several of these sites are hormone-dependent. Phosphorylation on Ser-303 occurs preferentially on isoform B, is highly hormone-dependent and modulates ubiquitination and sumoylation on Lys-392. Phosphorylation on Ser-303 and Ser-349 also requires induction by hormone. Basal phosphorylation on Ser-200 and Ser-404 is increased in response to progesterone and can be phosphorylated in vitro by the CDK2-A1 complex. Increased levels of phosphorylation on Ser-404 also in the presence of EGF, heregulin, IGF, PMA and FBS. Phosphorylation at this site by CDK2 is ligand-independent, and increases nuclear translocation and transcriptional activity. Phosphorylation at Ser-303, but not at Ser-200, is impaired during the G(2)/M phase of the cell cycle. Phosphorylation on Ser-349 by ERK1/2 MAPK is required for interaction with SP1. Post-translationally, sumoylation is hormone-dependent and represses transcriptional activity. Sumoylation on all three sites is enhanced by PIAS3. Desumoylated by SENP1. Sumoylation on Lys-392, the main site of sumoylation, is repressed by ubiquitination on the same site, and modulated by phosphorylation at Ser-303. In terms of processing, ubiquitination is hormone-dependent and represses sumoylation on the same site. Promoted by MAPK-mediated phosphorylation on Ser-303. Palmitoylated by ZDHHC7 and ZDHHC21. Palmitoylation is required for plasma membrane targeting and for rapid intracellular signaling via ERK and AKT kinases and cAMP generation. As to expression, expressed in mammary gland and uterus.

It localises to the nucleus. It is found in the cytoplasm. Functionally, the steroid hormones and their receptors are involved in the regulation of eukaryotic gene expression and affect cellular proliferation and differentiation in target tissues. Depending on the isoform, progesterone receptor functions as a transcriptional activator or repressor. In terms of biological role, ligand-dependent transdominant repressor of steroid hormone receptor transcriptional activity including repression of its isoform B, MR and ER. Transrepressional activity may involve recruitment of corepressor NCOR2. Transcriptional activator of several progesteron-dependent promoters in a variety of cell types. Involved in activation of SRC-dependent MAPK signaling on hormone stimulation. In Canis lupus familiaris (Dog), this protein is Progesterone receptor (PGR).